We begin with the raw amino-acid sequence, 336 residues long: GTPase Obg (336 aa).

An Obg domain is found at 1–159 (MKFLDETKVY…KTIWLRLKLI (159 aa)). The OBG-type G domain maps to 160–327 (ADAGLVGLPN…TLRALRSVID (168 aa)). Residues 166-173 (GLPNAGKS), 191-195 (FTTLH), 212-215 (DIPG), 279-282 (SQID), and 308-310 (SAV) each bind GTP. 2 residues coordinate Mg(2+): S173 and T193.

This sequence belongs to the TRAFAC class OBG-HflX-like GTPase superfamily. OBG GTPase family. Monomer. Requires Mg(2+) as cofactor.

The protein resides in the cytoplasm. Functionally, an essential GTPase which binds GTP, GDP and possibly (p)ppGpp with moderate affinity, with high nucleotide exchange rates and a fairly low GTP hydrolysis rate. Plays a role in control of the cell cycle, stress response, ribosome biogenesis and in those bacteria that undergo differentiation, in morphogenesis control. In Sinorhizobium medicae (strain WSM419) (Ensifer medicae), this protein is GTPase Obg.